Consider the following 70-residue polypeptide: Kappa-conotoxin-like Sx11.2 (70 aa).

Residues 1–26 (MMFRVTSVGCLLLVIVFLNLVVPTSA) form the signal peptide. 4 disulfides stabilise this stretch: C27/C41, C34/C46, C40/C50, and C45/C54. 4-carboxyglutamate is present on residues E30, E35, and E44. P53 is subject to 4-hydroxyproline. P57 is subject to Proline amide. A propeptide spanning residues 61–70 (SKLQEFFRQR) is cleaved from the precursor.

This sequence belongs to the conotoxin I2 superfamily. As to expression, expressed by the venom duct.

The protein resides in the secreted. Modulator of potassium channels, specifically up-modulates the calcium and voltage-gated BK channels, has no effect on single channel conductance, but increases the open probability of BK channels. This chain is Kappa-conotoxin-like Sx11.2, found in Conus striolatus (Cone snail).